The following is a 101-amino-acid chain: Citrate lyase acyl carrier protein (101 aa).

Serine 14 carries the post-translational modification O-(phosphoribosyl dephospho-coenzyme A)serine.

This sequence belongs to the CitD family. In terms of assembly, oligomer with a subunit composition of (alpha,beta,gamma)6.

The protein resides in the cytoplasm. Its function is as follows. Covalent carrier of the coenzyme of citrate lyase. In Clostridium perfringens (strain 13 / Type A), this protein is Citrate lyase acyl carrier protein.